Here is a 393-residue protein sequence, read N- to C-terminus: Putative competence-damage inducible protein (393 aa).

This sequence belongs to the CinA family.

The sequence is that of Putative competence-damage inducible protein from Streptococcus suis (strain 05ZYH33).